The chain runs to 513 residues: MRSRCTVSAVGLLSLCLVVSASLETITPSAFDGYPDEPCTINITIRNSRLILSWELENKSGPPANYTLWYTVMSKDENLTKVKNCSDTTKSSCDVTDKWLEGMESYVVAIVIVHRGDLTVCRCSDYIVPANAPLEPPEFEIVGFTDHINVTMEFPPVTSKIIQEKMKTTPFVIKEQIGDSVRKKHEPKVNNVTGNFTFVLRDLLPKTNYCVSLYFDDDPAIKSPLKCIVLQPGQESGLSESAIVGITTSCLVVMVFVSTIVMLKRIGYICLKDNLPNVLNFRHFLTWIIPERSPSEAIDRLEIIPTNKKKRLWNYDYEDGSDSDEEVPTASVTGYTMHGLTGKPLQQTSDTSASPEDPLHEEDSGAEESDEAGAGAGAEPELPTEAGAGPSEDPTGPYERRKSVLEDSFPREDNSSMDEPGDNIIFNVNLNSVFLRVLHDEDASETLSLEEDTILLDEGPQRTESDLRIAGGDRTQPPLPSLPSQDLWTEDGSSEKSDTSDSDADVGDGYIMR.

The first 21 residues, 1 to 21 (MRSRCTVSAVGLLSLCLVVSA), serve as a signal peptide directing secretion. Over 22–242 (SLETITPSAF…GQESGLSESA (221 aa)) the chain is Extracellular. Intrachain disulfides connect C39–C123 and C85–C93. Residues N42, N58, N65, N78, and N84 are each glycosylated (N-linked (GlcNAc...) asparagine). N-linked (GlcNAc...) asparagine glycosylation is found at N149, N191, and N195. An intrachain disulfide couples C210 to C227. Residues 243–263 (IVGITTSCLVVMVFVSTIVML) form a helical membrane-spanning segment. Topologically, residues 264–513 (KRIGYICLKD…ADVGDGYIMR (250 aa)) are cytoplasmic. The interval 334–402 (GYTMHGLTGK…DPTGPYERRK (69 aa)) is disordered. Y335 carries the phosphotyrosine modification. The segment covering 344-354 (PLQQTSDTSAS) has biased composition (polar residues). Residues 377-389 (GAEPELPTEAGAG) show a composition bias toward low complexity. S403 carries the post-translational modification Phosphoserine. Positions 421–444 (GDNIIFNVNLNSVFLRVLHDEDAS) are mediates interaction with STAT2 (and required for the recruitment of USP18). Phosphoserine is present on residues S448 and S465. A disordered region spans residues 458–513 (EGPQRTESDLRIAGGDRTQPPLPSLPSQDLWTEDGSSEKSDTSDSDADVGDGYIMR). A Phosphotyrosine modification is found at Y510.

This sequence belongs to the type II cytokine receptor family. Heterodimer with IFNAR1; forming the receptor for type I interferon. Interacts with the transcriptional factors STAT1 and STAT2. Interacts with JAK1. Interacts with USP18; indirectly via STAT2, it negatively regulates the assembly of the ternary interferon-IFNAR1-IFNAR2 complex and therefore type I interferon signaling. In terms of processing, phosphorylated on tyrosine residues upon interferon binding. Phosphorylation at Tyr-335 or Tyr-510 are sufficient to mediate interferon dependent activation of STAT1, STAT2 and STAT3 leading to antiproliferative effects on many different cell types. As to expression, widely expressed. Detected in liver, testis, kidney, salivary gland, thymus, brain, lung and placenta. Isoform 1, isoform 2 and isoform 3 are expressed in brain.

The protein resides in the cell membrane. Its subcellular location is the secreted. Functionally, together with IFNAR1, forms the heterodimeric receptor for type I interferons (including interferons alpha, beta, epsilon, omega and kappa). Type I interferon binding activates the JAK-STAT signaling cascade, resulting in transcriptional activation or repression of interferon-regulated genes that encode the effectors of the interferon response. Mechanistically, type I interferon-binding brings the IFNAR1 and IFNAR2 subunits into close proximity with one another, driving their associated Janus kinases (JAKs) (TYK2 bound to IFNAR1 and JAK1 bound to IFNAR2) to cross-phosphorylate one another. The activated kinases phosphorylate specific tyrosine residues on the intracellular domains of IFNAR1 and IFNAR2, forming docking sites for the STAT transcription factors (STAT1, STAT2 and STAT). STAT proteins are then phosphorylated by the JAKs, promoting their translocation into the nucleus to regulate expression of interferon-regulated genes. Its function is as follows. May be potent inhibitors of type I IFN receptor activity. The polypeptide is Interferon alpha/beta receptor 2 (Ifnar2) (Mus musculus (Mouse)).